The following is a 579-amino-acid chain: Glycine--tRNA ligase (579 aa).

A glycine-binding site is contributed by Glu-175. ATP contacts are provided by residues 207–209 and 218–219; these read RNE and RV. A glycine-binding site is contributed by Glu-226. Position 327-328 (327-328) interacts with ATP; the sequence is EC. 442–444 is a binding site for glycine; it reads EPS. Arg-449 provides a ligand contact to ATP.

It belongs to the class-II aminoacyl-tRNA synthetase family. As to quaternary structure, homodimer.

It catalyses the reaction tRNA(Gly) + glycine + ATP = glycyl-tRNA(Gly) + AMP + diphosphate. It carries out the reaction 2 ATP + H(+) = P(1),P(4)-bis(5'-adenosyl) tetraphosphate + diphosphate. Functionally, catalyzes the ATP-dependent ligation of glycine to the 3'-end of its cognate tRNA, via the formation of an aminoacyl-adenylate intermediate (Gly-AMP). Also produces diadenosine tetraphosphate (Ap4A), a universal pleiotropic signaling molecule needed for cell regulation pathways, by direct condensation of 2 ATPs. Thereby, may play a special role in Ap4A homeostasis. In Encephalitozoon cuniculi (strain GB-M1) (Microsporidian parasite), this protein is Glycine--tRNA ligase.